The following is a 127-amino-acid chain: Ribosome-binding factor A (127 aa).

This sequence belongs to the RbfA family. In terms of assembly, monomer. Binds 30S ribosomal subunits, but not 50S ribosomal subunits or 70S ribosomes.

It localises to the cytoplasm. Functionally, one of several proteins that assist in the late maturation steps of the functional core of the 30S ribosomal subunit. Associates with free 30S ribosomal subunits (but not with 30S subunits that are part of 70S ribosomes or polysomes). Required for efficient processing of 16S rRNA. May interact with the 5'-terminal helix region of 16S rRNA. The polypeptide is Ribosome-binding factor A (Aromatoleum aromaticum (strain DSM 19018 / LMG 30748 / EbN1) (Azoarcus sp. (strain EbN1))).